A 377-amino-acid chain; its full sequence is Nitric oxide reductase FlRd-NAD(+) reductase (377 aa).

It belongs to the FAD-dependent oxidoreductase family. It depends on FAD as a cofactor.

It localises to the cytoplasm. It catalyses the reaction 2 reduced [nitric oxide reductase rubredoxin domain] + NAD(+) + H(+) = 2 oxidized [nitric oxide reductase rubredoxin domain] + NADH. The protein operates within nitrogen metabolism; nitric oxide reduction. Its function is as follows. One of at least two accessory proteins for anaerobic nitric oxide (NO) reductase. Reduces the rubredoxin moiety of NO reductase. The protein is Nitric oxide reductase FlRd-NAD(+) reductase of Escherichia coli (strain SMS-3-5 / SECEC).